Reading from the N-terminus, the 188-residue chain is Photosystem I assembly protein Ycf4 (188 aa).

2 helical membrane-spanning segments follow: residues 26-48 and 68-90; these read MLWA…SSYF and AALT…VFFL.

Belongs to the Ycf4 family.

Its subcellular location is the cellular thylakoid membrane. Its function is as follows. Seems to be required for the assembly of the photosystem I complex. The protein is Photosystem I assembly protein Ycf4 of Picosynechococcus sp. (strain ATCC 27264 / PCC 7002 / PR-6) (Agmenellum quadruplicatum).